The following is a 316-amino-acid chain: Apolipoprotein E (316 aa).

Positions 1–18 (MKALWAVLVVTLLAGCLA) are cleaved as a signal peptide. Repeat copies occupy residues 76 to 97 (VLME…EQLG), 98 to 119 (PMAE…SRLG), 120 to 141 (ADME…TMLG), 142 to 163 (QSTE…KRLM), 164 to 185 (RDAE…EGAE), 186 to 207 (RGVG…QRTA), 208 to 229 (NLGA…ARIR), and 230 to 251 (GRLE…EQME). An 8 X 22 AA approximate tandem repeats region spans residues 76 to 251 (VLMEDTMTEL…RLEEVREQME (176 aa)). Residue Met-139 is modified to Methionine sulfoxide. A Phosphoserine modification is found at Ser-143. Residues 154–164 (HLRKLRKRLMR) form an LDL and other lipoprotein receptors binding region. Heparin is bound at residue 158-161 (LRKR). The tract at residues 206-286 (TANLGAGAGK…GWFEPLVEDM (81 aa)) is lipid-binding and lipoprotein association. Residue 225–232 (GARIRGRL) participates in heparin binding. Positions 262–316 (QQMRLQAEIFQARLKGWFEPLVEDMQRQWANLVEKIQASVAANPIPPSSVPQESQ) are homooligomerization. The interval 274-286 (RLKGWFEPLVEDM) is specificity for association with VLDL.

The protein belongs to the apolipoprotein A1/A4/E family. Homotetramer. May interact with ABCA1; functionally associated with ABCA1 in the biogenesis of HDLs. May interact with APP/A4 amyloid-beta peptide; the interaction is extremely stable in vitro but its physiological significance is unclear. May interact with MAPT. May interact with MAP2. In the cerebrospinal fluid, interacts with secreted SORL1. Interacts with PMEL; this allows the loading of PMEL luminal fragment on ILVs to induce fibril nucleation. APOE exists as multiple glycosylated and sialylated glycoforms within cells and in plasma. The extent of glycosylation and sialylation are tissue and context specific. In terms of processing, glycated in plasma VLDL. Post-translationally, phosphorylated by FAM20C in the extracellular medium.

The protein localises to the secreted. It localises to the extracellular space. The protein resides in the extracellular matrix. It is found in the extracellular vesicle. Its subcellular location is the endosome. The protein localises to the multivesicular body. In terms of biological role, APOE is an apolipoprotein, a protein associating with lipid particles, that mainly functions in lipoprotein-mediated lipid transport between organs via the plasma and interstitial fluids. APOE is a core component of plasma lipoproteins and is involved in their production, conversion and clearance. Apolipoproteins are amphipathic molecules that interact both with lipids of the lipoprotein particle core and the aqueous environment of the plasma. As such, APOE associates with chylomicrons, chylomicron remnants, very low density lipoproteins (VLDL) and intermediate density lipoproteins (IDL) but shows a preferential binding to high-density lipoproteins (HDL). It also binds a wide range of cellular receptors including the LDL receptor/LDLR, the LDL receptor-related proteins LRP1, LRP2 and LRP8 and the very low-density lipoprotein receptor/VLDLR that mediate the cellular uptake of the APOE-containing lipoprotein particles. Finally, APOE also has a heparin-binding activity and binds heparan-sulfate proteoglycans on the surface of cells, a property that supports the capture and the receptor-mediated uptake of APOE-containing lipoproteins by cells. A main function of APOE is to mediate lipoprotein clearance through the uptake of chylomicrons, VLDLs, and HDLs by hepatocytes. APOE is also involved in the biosynthesis by the liver of VLDLs as well as their uptake by peripheral tissues ensuring the delivery of triglycerides and energy storage in muscle, heart and adipose tissues. By participating in the lipoprotein-mediated distribution of lipids among tissues, APOE plays a critical role in plasma and tissues lipid homeostasis. APOE is also involved in two steps of reverse cholesterol transport, the HDLs-mediated transport of cholesterol from peripheral tissues to the liver, and thereby plays an important role in cholesterol homeostasis. First, it is functionally associated with ABCA1 in the biogenesis of HDLs in tissues. Second, it is enriched in circulating HDLs and mediates their uptake by hepatocytes. APOE also plays an important role in lipid transport in the central nervous system, regulating neuron survival and sprouting. The chain is Apolipoprotein E (Apoe) from Onychomys torridus (Southern grasshopper mouse).